Here is a 274-residue protein sequence, read N- to C-terminus: Putative ABC transporter ATP-binding protein alr3946 (274 aa).

The region spanning 6 to 242 is the ABC transporter domain; sequence LTFEQVYYTY…REILDSIELG (237 aa). 40–47 provides a ligand contact to ATP; that stretch reads GRNGCGKT.

Belongs to the ABC transporter superfamily.

The protein resides in the cell inner membrane. Its function is as follows. Probably part of an ABC transporter complex. Responsible for energy coupling to the transport system. In Nostoc sp. (strain PCC 7120 / SAG 25.82 / UTEX 2576), this protein is Putative ABC transporter ATP-binding protein alr3946.